Consider the following 451-residue polypeptide: UDP-N-acetylmuramate--L-alanine ligase (451 aa).

ATP is bound at residue 110–116 (GTHGKTT).

Belongs to the MurCDEF family.

Its subcellular location is the cytoplasm. The enzyme catalyses UDP-N-acetyl-alpha-D-muramate + L-alanine + ATP = UDP-N-acetyl-alpha-D-muramoyl-L-alanine + ADP + phosphate + H(+). The protein operates within cell wall biogenesis; peptidoglycan biosynthesis. Its function is as follows. Cell wall formation. This chain is UDP-N-acetylmuramate--L-alanine ligase, found in Francisella tularensis subsp. tularensis (strain WY96-3418).